The following is a 240-amino-acid chain: Purine nucleoside phosphorylase DeoD-type (240 aa).

Residue His5 participates in a purine D-ribonucleoside binding. Phosphate-binding positions include Gly21, Arg25, Arg44, and 88 to 91 (RVGS). A purine D-ribonucleoside-binding positions include 180 to 182 (EME) and 204 to 205 (SD). Asp205 acts as the Proton donor in catalysis.

The protein belongs to the PNP/UDP phosphorylase family. As to quaternary structure, homohexamer; trimer of homodimers.

It catalyses the reaction a purine D-ribonucleoside + phosphate = a purine nucleobase + alpha-D-ribose 1-phosphate. The catalysed reaction is a purine 2'-deoxy-D-ribonucleoside + phosphate = a purine nucleobase + 2-deoxy-alpha-D-ribose 1-phosphate. In terms of biological role, catalyzes the reversible phosphorolytic breakdown of the N-glycosidic bond in the beta-(deoxy)ribonucleoside molecules, with the formation of the corresponding free purine bases and pentose-1-phosphate. This Actinobacillus pleuropneumoniae serotype 5b (strain L20) protein is Purine nucleoside phosphorylase DeoD-type.